The chain runs to 251 residues: Triosephosphate isomerase (251 aa).

9-11 serves as a coordination point for substrate; the sequence is NWK. His95 serves as the catalytic Electrophile. Glu167 acts as the Proton acceptor in catalysis. Substrate-binding positions include Gly173, Ser213, and 234-235; that span reads GG.

It belongs to the triosephosphate isomerase family. Homodimer.

The protein localises to the cytoplasm. It carries out the reaction D-glyceraldehyde 3-phosphate = dihydroxyacetone phosphate. It functions in the pathway carbohydrate biosynthesis; gluconeogenesis. Its pathway is carbohydrate degradation; glycolysis; D-glyceraldehyde 3-phosphate from glycerone phosphate: step 1/1. Involved in the gluconeogenesis. Catalyzes stereospecifically the conversion of dihydroxyacetone phosphate (DHAP) to D-glyceraldehyde-3-phosphate (G3P). This Lactobacillus gasseri (strain ATCC 33323 / DSM 20243 / BCRC 14619 / CIP 102991 / JCM 1131 / KCTC 3163 / NCIMB 11718 / NCTC 13722 / AM63) protein is Triosephosphate isomerase.